The sequence spans 284 residues: 2-dehydro-3-deoxyphosphooctonate aldolase (284 aa).

Belongs to the KdsA family.

Its subcellular location is the cytoplasm. The catalysed reaction is D-arabinose 5-phosphate + phosphoenolpyruvate + H2O = 3-deoxy-alpha-D-manno-2-octulosonate-8-phosphate + phosphate. The protein operates within carbohydrate biosynthesis; 3-deoxy-D-manno-octulosonate biosynthesis; 3-deoxy-D-manno-octulosonate from D-ribulose 5-phosphate: step 2/3. It participates in bacterial outer membrane biogenesis; lipopolysaccharide biosynthesis. This is 2-dehydro-3-deoxyphosphooctonate aldolase from Vibrio atlanticus (strain LGP32) (Vibrio splendidus (strain Mel32)).